The chain runs to 189 residues: Chitin synthase 2 (189 aa).

It belongs to the chitin synthase family. Class II subfamily.

The protein localises to the cell membrane. It carries out the reaction [(1-&gt;4)-N-acetyl-beta-D-glucosaminyl](n) + UDP-N-acetyl-alpha-D-glucosamine = [(1-&gt;4)-N-acetyl-beta-D-glucosaminyl](n+1) + UDP + H(+). Polymerizes chitin, a structural polymer of the cell wall and septum, by transferring the sugar moiety of UDP-GlcNAc to the non-reducing end of the growing chitin polymer. This Aspergillus niger protein is Chitin synthase 2 (chs2).